A 133-amino-acid chain; its full sequence is Histone H2A (133 aa).

Residues M1–A10 are compositionally biased toward gly residues. The segment at M1–L25 is disordered. K5 and K9 each carry N6-acetyllysine. Low complexity predominate over residues S11–G24. Q106 carries the post-translational modification N5-methylglutamine. Phosphoserine is present on S130. The short motif at S130 to Q131 is the [ST]-Q motif element.

Belongs to the histone H2A family. The nucleosome is a histone octamer containing two molecules each of H2A, H2B, H3 and H4 assembled in one H3-H4 heterotetramer and two H2A-H2B heterodimers. The octamer wraps approximately 147 bp of DNA. In terms of processing, phosphorylated to form H2AS128ph (gamma-H2A) in response to DNA double-strand breaks (DSBs) generated by exogenous genotoxic agents and by stalled replication forks. Phosphorylation is dependent on the DNA damage checkpoint kinases MEC1/ATR and TEL1/ATM, spreads on either side of a detected DSB site and may mark the surrounding chromatin for recruitment of proteins required for DNA damage signaling and repair. Gamma-H2A is removed from the DNA prior to the strand invasion-primer extension step of the repair process and subsequently dephosphorylated. Dephosphorylation is necessary for efficient recovery from the DNA damage checkpoint. Acetylated by ESA1 to form H2AK4ac and H2AK7ac.

Its subcellular location is the nucleus. It is found in the chromosome. Its function is as follows. Core component of nucleosome which plays a central role in DNA double strand break (DSB) repair. Nucleosomes wrap and compact DNA into chromatin, limiting DNA accessibility to the cellular machineries which require DNA as a template. Histones thereby play a central role in transcription regulation, DNA repair, DNA replication and chromosomal stability. DNA accessibility is regulated via a complex set of post-translational modifications of histones, also called histone code, and nucleosome remodeling. The polypeptide is Histone H2A (HTA1) (Coccidioides immitis (strain RS) (Valley fever fungus)).